The chain runs to 24 residues: Unknown protein 6 (24 aa).

This Lonomia obliqua (Moth) protein is Unknown protein 6.